The following is a 323-amino-acid chain: Cyclin-H (323 aa).

S5 bears the Phosphoserine; by CDK8 mark. S132 carries the phosphoserine modification. The segment at 299 to 323 (DDDYVPKKSKHEEEEWTDDDLVESL) is disordered. The span at 302 to 311 (YVPKKSKHEE) shows a compositional bias: basic and acidic residues. Residues 312–323 (EEWTDDDLVESL) are compositionally biased toward acidic residues. T315 carries the post-translational modification Phosphothreonine. S322 carries the phosphoserine modification.

It belongs to the cyclin family. Cyclin C subfamily. As to quaternary structure, associates primarily with CDK7 and MAT1 to form the CAK complex. CAK can further associate with the core-TFIIH to form the TFIIH basal transcription factor.

The protein localises to the nucleus. In terms of biological role, regulates CDK7, the catalytic subunit of the CDK-activating kinase (CAK) enzymatic complex. CAK activates the cyclin-associated kinases CDK1, CDK2, CDK4 and CDK6 by threonine phosphorylation. CAK complexed to the core-TFIIH basal transcription factor activates RNA polymerase II by serine phosphorylation of the repetitive C-terminal domain (CTD) of its large subunit (POLR2A), allowing its escape from the promoter and elongation of the transcripts. Involved in cell cycle control and in RNA transcription by RNA polymerase II. Its expression and activity are constant throughout the cell cycle. The sequence is that of Cyclin-H (CCNH) from Macaca fascicularis (Crab-eating macaque).